Here is a 310-residue protein sequence, read N- to C-terminus: Ribosomal RNA small subunit methyltransferase H (310 aa).

Residues 33–35 (AGH), D53, F79, D100, and Q107 contribute to the S-adenosyl-L-methionine site.

It belongs to the methyltransferase superfamily. RsmH family.

It localises to the cytoplasm. The enzyme catalyses cytidine(1402) in 16S rRNA + S-adenosyl-L-methionine = N(4)-methylcytidine(1402) in 16S rRNA + S-adenosyl-L-homocysteine + H(+). Specifically methylates the N4 position of cytidine in position 1402 (C1402) of 16S rRNA. In Clostridium perfringens (strain 13 / Type A), this protein is Ribosomal RNA small subunit methyltransferase H.